Here is a 249-residue protein sequence, read N- to C-terminus: Methyl-coenzyme M reductase I subunit gamma (249 aa).

Position 120 (arginine 120) interacts with coenzyme M.

This sequence belongs to the methyl-coenzyme M reductase gamma subunit family. As to quaternary structure, MCR is a hexamer of two alpha, two beta, and two gamma chains, forming a dimer of heterotrimers. Coenzyme F430 is required as a cofactor.

It is found in the cytoplasm. The catalysed reaction is coenzyme B + methyl-coenzyme M = methane + coenzyme M-coenzyme B heterodisulfide. It participates in one-carbon metabolism; methyl-coenzyme M reduction; methane from methyl-coenzyme M: step 1/1. In terms of biological role, component of the methyl-coenzyme M reductase (MCR) I that catalyzes the reductive cleavage of methyl-coenzyme M (CoM-S-CH3 or 2-(methylthio)ethanesulfonate) using coenzyme B (CoB or 7-mercaptoheptanoylthreonine phosphate) as reductant which results in the production of methane and the mixed heterodisulfide of CoB and CoM (CoM-S-S-CoB). This is the final step in methanogenesis. This chain is Methyl-coenzyme M reductase I subunit gamma (mcrG), found in Methanothermobacter thermautotrophicus (strain ATCC 29096 / DSM 1053 / JCM 10044 / NBRC 100330 / Delta H) (Methanobacterium thermoautotrophicum).